The following is a 225-amino-acid chain: Ribonuclease 3 (225 aa).

The RNase III domain occupies Ile5–Asp127. Position 40 (Glu40) interacts with Mg(2+). Asp44 is a catalytic residue. Residues Asp113 and Glu116 each contribute to the Mg(2+) site. Residue Glu116 is part of the active site. Residues Asp154–Asn224 form the DRBM domain.

This sequence belongs to the ribonuclease III family. As to quaternary structure, homodimer. Mg(2+) is required as a cofactor.

It localises to the cytoplasm. It carries out the reaction Endonucleolytic cleavage to 5'-phosphomonoester.. Its function is as follows. Digests double-stranded RNA. Involved in the processing of primary rRNA transcript to yield the immediate precursors to the large and small rRNAs (23S and 16S). Processes some mRNAs, and tRNAs when they are encoded in the rRNA operon. Processes pre-crRNA and tracrRNA of type II CRISPR loci if present in the organism. The chain is Ribonuclease 3 from Vibrio vulnificus (strain CMCP6).